The following is a 784-amino-acid chain: LPS-assembly protein LptD (784 aa).

The N-terminal stretch at 1–24 (MKKRIPTLLATMIATALYSQQGLA) is a signal peptide. Cystine bridges form between Cys31–Cys724 and Cys173–Cys725.

This sequence belongs to the LptD family. As to quaternary structure, component of the lipopolysaccharide transport and assembly complex. Interacts with LptE and LptA. In terms of processing, contains two intramolecular disulfide bonds.

Its subcellular location is the cell outer membrane. Together with LptE, is involved in the assembly of lipopolysaccharide (LPS) at the surface of the outer membrane. This Escherichia coli O6:K15:H31 (strain 536 / UPEC) protein is LPS-assembly protein LptD.